We begin with the raw amino-acid sequence, 217 residues long: GTP cyclohydrolase 1 (217 aa).

Positions 109, 112, and 180 each coordinate Zn(2+).

Belongs to the GTP cyclohydrolase I family. As to quaternary structure, toroid-shaped homodecamer, composed of two pentamers of five dimers.

The enzyme catalyses GTP + H2O = 7,8-dihydroneopterin 3'-triphosphate + formate + H(+). Its pathway is cofactor biosynthesis; 7,8-dihydroneopterin triphosphate biosynthesis; 7,8-dihydroneopterin triphosphate from GTP: step 1/1. This Vibrio cholerae serotype O1 (strain ATCC 39315 / El Tor Inaba N16961) protein is GTP cyclohydrolase 1.